We begin with the raw amino-acid sequence, 95 residues long: Co-chaperonin GroES (95 aa).

The protein belongs to the GroES chaperonin family. Heptamer of 7 subunits arranged in a ring. Interacts with the chaperonin GroEL.

It localises to the cytoplasm. Its function is as follows. Together with the chaperonin GroEL, plays an essential role in assisting protein folding. The GroEL-GroES system forms a nano-cage that allows encapsulation of the non-native substrate proteins and provides a physical environment optimized to promote and accelerate protein folding. GroES binds to the apical surface of the GroEL ring, thereby capping the opening of the GroEL channel. The sequence is that of Co-chaperonin GroES from Francisella philomiragia subsp. philomiragia (strain ATCC 25017 / CCUG 19701 / FSC 153 / O#319-036).